Reading from the N-terminus, the 188-residue chain is Probable RNA 2'-phosphotransferase (188 aa).

Belongs to the KptA/TPT1 family.

In terms of biological role, removes the 2'-phosphate from RNA via an intermediate in which the phosphate is ADP-ribosylated by NAD followed by a presumed transesterification to release the RNA and generate ADP-ribose 1''-2''-cyclic phosphate (APPR&gt;P). May function as an ADP-ribosylase. The sequence is that of Probable RNA 2'-phosphotransferase from Lacticaseibacillus paracasei (strain ATCC 334 / BCRC 17002 / CCUG 31169 / CIP 107868 / KCTC 3260 / NRRL B-441) (Lactobacillus paracasei).